The chain runs to 72 residues: Large ribosomal subunit protein bL28 (72 aa).

Belongs to the bacterial ribosomal protein bL28 family.

This chain is Large ribosomal subunit protein bL28, found in Chlorobaculum tepidum (strain ATCC 49652 / DSM 12025 / NBRC 103806 / TLS) (Chlorobium tepidum).